The following is a 1058-amino-acid chain: Carbamoyl phosphate synthase large chain (1058 aa).

The segment at 1-401 (MPKRKDIKTI…SLLKAIRSLE (401 aa)) is carboxyphosphate synthetic domain. Positions 129, 169, 175, 176, 208, 210, 215, 241, 242, 243, 284, and 298 each coordinate ATP. Residues 133-327 (RDLMNELNEP…IAKIAAKIAV (195 aa)) form the ATP-grasp 1 domain. Positions 284, 298, and 300 each coordinate Mg(2+). Positions 284, 298, and 300 each coordinate Mn(2+). The interval 402–546 (YGVHHLGLPN…YSTYEFENES (145 aa)) is oligomerization domain. The segment at 547 to 929 (TRSDKEKIVV…ALYKGLTAAG (383 aa)) is carbamoyl phosphate synthetic domain. Positions 671-861 (EKLLIGLKIP…VANIAMQCIL (191 aa)) constitute an ATP-grasp 2 domain. 10 residues coordinate ATP: Arg-707, Arg-746, Leu-748, Glu-752, Gly-777, Val-778, His-779, Ser-780, Gln-820, and Glu-832. Residues Gln-820, Glu-832, and Asn-834 each coordinate Mg(2+). Mn(2+) is bound by residues Gln-820, Glu-832, and Asn-834. Positions 930 to 1058 (IKIKDYGRVL…ESMSFRVQTL (129 aa)) constitute an MGS-like domain. The tract at residues 930 to 1058 (IKIKDYGRVL…ESMSFRVQTL (129 aa)) is allosteric domain.

This sequence belongs to the CarB family. In terms of assembly, composed of two chains; the small (or glutamine) chain promotes the hydrolysis of glutamine to ammonia, which is used by the large (or ammonia) chain to synthesize carbamoyl phosphate. Tetramer of heterodimers (alpha,beta)4. It depends on Mg(2+) as a cofactor. Mn(2+) is required as a cofactor.

It carries out the reaction hydrogencarbonate + L-glutamine + 2 ATP + H2O = carbamoyl phosphate + L-glutamate + 2 ADP + phosphate + 2 H(+). It catalyses the reaction hydrogencarbonate + NH4(+) + 2 ATP = carbamoyl phosphate + 2 ADP + phosphate + 2 H(+). The protein operates within amino-acid biosynthesis; L-arginine biosynthesis; carbamoyl phosphate from bicarbonate: step 1/1. It participates in pyrimidine metabolism; UMP biosynthesis via de novo pathway; (S)-dihydroorotate from bicarbonate: step 1/3. In terms of biological role, large subunit of the glutamine-dependent carbamoyl phosphate synthetase (CPSase). CPSase catalyzes the formation of carbamoyl phosphate from the ammonia moiety of glutamine, carbonate, and phosphate donated by ATP, constituting the first step of 2 biosynthetic pathways, one leading to arginine and/or urea and the other to pyrimidine nucleotides. The large subunit (synthetase) binds the substrates ammonia (free or transferred from glutamine from the small subunit), hydrogencarbonate and ATP and carries out an ATP-coupled ligase reaction, activating hydrogencarbonate by forming carboxy phosphate which reacts with ammonia to form carbamoyl phosphate. This is Carbamoyl phosphate synthase large chain from Fusobacterium nucleatum subsp. nucleatum (strain ATCC 25586 / DSM 15643 / BCRC 10681 / CIP 101130 / JCM 8532 / KCTC 2640 / LMG 13131 / VPI 4355).